A 103-amino-acid polypeptide reads, in one-letter code: Large ribosomal subunit protein uL24 (103 aa).

The protein belongs to the universal ribosomal protein uL24 family. In terms of assembly, part of the 50S ribosomal subunit.

One of two assembly initiator proteins, it binds directly to the 5'-end of the 23S rRNA, where it nucleates assembly of the 50S subunit. In terms of biological role, one of the proteins that surrounds the polypeptide exit tunnel on the outside of the subunit. The protein is Large ribosomal subunit protein uL24 of Haemophilus influenzae (strain 86-028NP).